A 369-amino-acid chain; its full sequence is Putative cyclin-F1-1 (369 aa).

The interval 328–350 (AQHHLESKPAGAAGVGINSSGDD) is disordered.

The protein belongs to the cyclin family. Cyclin F subfamily.

This is Putative cyclin-F1-1 (CYCF1-1) from Oryza sativa subsp. japonica (Rice).